The sequence spans 481 residues: Bifunctional protein HldE (481 aa).

Residues 1-318 (MKVTLPDFRR…ENAIRGRAET (318 aa)) form a ribokinase region. Residue 195–198 (NLSE) coordinates ATP. The active site involves Asp-264. Residues 344-481 (MTNGIFDILH…KRRAGQRTVV (138 aa)) are cytidylyltransferase.

This sequence in the N-terminal section; belongs to the carbohydrate kinase PfkB family. The protein in the C-terminal section; belongs to the cytidylyltransferase family. Homodimer.

It catalyses the reaction D-glycero-beta-D-manno-heptose 7-phosphate + ATP = D-glycero-beta-D-manno-heptose 1,7-bisphosphate + ADP + H(+). The enzyme catalyses D-glycero-beta-D-manno-heptose 1-phosphate + ATP + H(+) = ADP-D-glycero-beta-D-manno-heptose + diphosphate. It functions in the pathway nucleotide-sugar biosynthesis; ADP-L-glycero-beta-D-manno-heptose biosynthesis; ADP-L-glycero-beta-D-manno-heptose from D-glycero-beta-D-manno-heptose 7-phosphate: step 1/4. It participates in nucleotide-sugar biosynthesis; ADP-L-glycero-beta-D-manno-heptose biosynthesis; ADP-L-glycero-beta-D-manno-heptose from D-glycero-beta-D-manno-heptose 7-phosphate: step 3/4. Its function is as follows. Catalyzes the phosphorylation of D-glycero-D-manno-heptose 7-phosphate at the C-1 position to selectively form D-glycero-beta-D-manno-heptose-1,7-bisphosphate. In terms of biological role, catalyzes the ADP transfer from ATP to D-glycero-beta-D-manno-heptose 1-phosphate, yielding ADP-D-glycero-beta-D-manno-heptose. The sequence is that of Bifunctional protein HldE from Sodalis glossinidius (strain morsitans).